The sequence spans 201 residues: Potassium-transporting ATPase KdpC subunit (201 aa).

A helical membrane pass occupies residues 7-29 (PALVLLTALTAITGLAYPLAMTG).

It belongs to the KdpC family. The system is composed of three essential subunits: KdpA, KdpB and KdpC.

Its subcellular location is the cell inner membrane. Functionally, part of the high-affinity ATP-driven potassium transport (or Kdp) system, which catalyzes the hydrolysis of ATP coupled with the electrogenic transport of potassium into the cytoplasm. This subunit acts as a catalytic chaperone that increases the ATP-binding affinity of the ATP-hydrolyzing subunit KdpB by the formation of a transient KdpB/KdpC/ATP ternary complex. The protein is Potassium-transporting ATPase KdpC subunit of Methylobacterium radiotolerans (strain ATCC 27329 / DSM 1819 / JCM 2831 / NBRC 15690 / NCIMB 10815 / 0-1).